Here is a 324-residue protein sequence, read N- to C-terminus: Protoheme IX farnesyltransferase (324 aa).

Transmembrane regions (helical) follow at residues 31 to 51 (LILL…SGQV), 56 to 76 (FLTT…INCI), 105 to 125 (VFAA…ANLL), 126 to 146 (SACL…YWLK), 153 to 173 (IVIG…AVTG), 181 to 201 (VLFA…AMMI), 214 to 234 (PVVN…LLLL), 238 to 258 (LLLV…AIVL), and 285 to 305 (FSIL…LPWT).

The protein belongs to the UbiA prenyltransferase family. Protoheme IX farnesyltransferase subfamily.

The protein resides in the cell inner membrane. The catalysed reaction is heme b + (2E,6E)-farnesyl diphosphate + H2O = Fe(II)-heme o + diphosphate. It participates in porphyrin-containing compound metabolism; heme O biosynthesis; heme O from protoheme: step 1/1. Functionally, converts heme B (protoheme IX) to heme O by substitution of the vinyl group on carbon 2 of heme B porphyrin ring with a hydroxyethyl farnesyl side group. This is Protoheme IX farnesyltransferase from Acaryochloris marina (strain MBIC 11017).